A 306-amino-acid polypeptide reads, in one-letter code: tRNA pseudouridine synthase B (306 aa).

Residue Asp48 is the Nucleophile of the active site.

This sequence belongs to the pseudouridine synthase TruB family. Type 1 subfamily.

It carries out the reaction uridine(55) in tRNA = pseudouridine(55) in tRNA. Responsible for synthesis of pseudouridine from uracil-55 in the psi GC loop of transfer RNAs. The protein is tRNA pseudouridine synthase B of Haemophilus influenzae (strain PittEE).